The primary structure comprises 198 residues: Small ribosomal subunit protein uS4c (198 aa).

The interval 17 to 40 (TLPGLTSKRPKNRKDSMNRSSSRK) is disordered. Residues 88–154 (MRLDKSFSIG…IKKNIDLFQR (67 aa)) enclose the S4 RNA-binding domain.

Belongs to the universal ribosomal protein uS4 family. In terms of assembly, part of the 30S ribosomal subunit. Contacts protein S5. The interaction surface between S4 and S5 is involved in control of translational fidelity.

Its subcellular location is the plastid. The protein resides in the chloroplast. One of the primary rRNA binding proteins, it binds directly to 16S rRNA where it nucleates assembly of the body of the 30S subunit. Its function is as follows. With S5 and S12 plays an important role in translational accuracy. The protein is Small ribosomal subunit protein uS4c (rps4) of Pinus thunbergii (Japanese black pine).